Here is a 366-residue protein sequence, read N- to C-terminus: MLIWLVELADHFQFFNLFRYITFRTGAALFTSALIVFLFGPAMIASLRIRQGKGQPIRADGPQTHFKKAGTPTMGGLMILTGIVVSSLLWADLSSIYVVSTLLVTLGFGAIGFYDDYLKVTKQSEKGFSGKARLGIEFVIAAVAVFFMMQAALSAGAAGSTFGSSVTFPFFKDLMLNLGYFFVLFGGFVIVGAGNSVNLTDGLDGLAIVPVMIASAAFGLIAYLAGNAVFANYLQIHFVPGTGELAVILGAVIGAGLGFLWFNAPPAAIFMGDTGSLALGGLIGTVAVATKHEIVMIIIGGLFVIETLSVIIQVFWFKRTGHRVFLMAPIHHHFEKKGWTESQVVIRFWIIAVILAMVGLSTLKLR.

A run of 10 helical transmembrane segments spans residues 27–47, 71–91, 93–113, 138–158, 174–194, 205–225, 245–265, 268–288, 297–317, and 343–363; these read AALF…IASL, TPTM…LLWA, LSSI…AIGF, FVIA…AGAA, LMLN…VGAG, GLAI…AYLA, LAVI…FNAP, AIFM…TVAV, IIIG…VFWF, and QVVI…LSTL.

Belongs to the glycosyltransferase 4 family. MraY subfamily. Mg(2+) serves as cofactor.

It localises to the cell inner membrane. The catalysed reaction is UDP-N-acetyl-alpha-D-muramoyl-L-alanyl-gamma-D-glutamyl-meso-2,6-diaminopimeloyl-D-alanyl-D-alanine + di-trans,octa-cis-undecaprenyl phosphate = di-trans,octa-cis-undecaprenyl diphospho-N-acetyl-alpha-D-muramoyl-L-alanyl-D-glutamyl-meso-2,6-diaminopimeloyl-D-alanyl-D-alanine + UMP. It participates in cell wall biogenesis; peptidoglycan biosynthesis. In terms of biological role, catalyzes the initial step of the lipid cycle reactions in the biosynthesis of the cell wall peptidoglycan: transfers peptidoglycan precursor phospho-MurNAc-pentapeptide from UDP-MurNAc-pentapeptide onto the lipid carrier undecaprenyl phosphate, yielding undecaprenyl-pyrophosphoryl-MurNAc-pentapeptide, known as lipid I. The chain is Phospho-N-acetylmuramoyl-pentapeptide-transferase from Rhizobium meliloti (strain 1021) (Ensifer meliloti).